A 767-amino-acid polypeptide reads, in one-letter code: MTISPPESGEKNKKVLEDPVKADPRPIDFAKLDKPGFWSSKLSKGPKTTTWIWNLHADAHDFDVHTGDAEEATRKIFSAHFGHLAVIFIWMSAAFFHGARFSNYSGWLADPTHVKPGAQQVWAIVGQEMLNADLGANYNGIQISSGIFHMWRAWGITNESELMALAIGAVVMAALMLHAGIFHYHKAAPKMEWFQDIESMLNHHIAGLVGLGSLAWAGHCIHIGAPTAALLDAIDAGSPLVINGKEIATIADMPMPHQLCDPQIIGQIFPGLASGTGNFFSLNWLAFSDFLTFKGGLNPVTGSLWMTDVSHHHLAFGVIAIIGGHMYRTNYGIGHSMKEILDSQQGDPILFPAPKGHQGLFEFMAESRHAQLSVNLAMLGSISILVSHHMYAMPPYPYIATDYMTVLGLFTHHMWIGGLFIVGAGAHAGIAMVRDYDPAKHIDNVLDRILKARDALISHLNWVCMWLGFHSFGLYIHNDTMRALGRPQDMFSDSAIQLQPIFAQWVQSIQASAVGTFLLAGTSEALPHKALSEVFNGSLVEVGGKVAIAPIPLGTADLMIHHIHAFQIHVTVLILLKGVLYARSSRLIPDKASLGFRFPCDGPGRGGTCQVSSWDHVFLALFWMYNCLSIVIFHFSWKMQSDVWGLTGGNFAQSSITINGWLRDFLWAQASQVLTSYGQSISMYGLMFLGAHFIWAFSLMFLFSGRGYWQELFESIVWAHNKLKVAPTIQPRALSITQGRAVGVTHFLVGGIATTWAFFHARLFGLG.

Positions 1–22 are disordered; sequence MTISPPESGEKNKKVLEDPVKA. A compositionally biased stretch (basic and acidic residues) spans 8-22; the sequence is SGEKNKKVLEDPVKA. Helical transmembrane passes span 76–99, 162–185, 201–225, 309–327, 368–391, 407–433, 455–477, and 558–576; these read IFSAHFGHLAVIFIWMSAAFFHGA, LMALAIGAVVMAALMLHAGIFHYH, LNHHIAGLVGLGSLAWAGHCIHIGA, VSHHHLAFGVIAIIGGHMY, RHAQLSVNLAMLGSISILVSHHMY, LGLFTHHMWIGGLFIVGAGAHAGIAMV, ALISHLNWVCMWLGFHSFGLYIH, and LMIHHIHAFQIHVTVLILL. [4Fe-4S] cluster is bound by residues Cys-600 and Cys-609. Transmembrane regions (helical) follow at residues 616–637 and 681–703; these read HVFLALFWMYNCLSIVIFHFSW and ISMYGLMFLGAHFIWAFSLMFLF. His-692 contacts divinylchlorophyll a'. Met-700 and Tyr-708 together coordinate divinyl chlorophyll a. Trp-709 is a binding site for phylloquinone. The chain crosses the membrane as a helical span at residues 741–761; that stretch reads AVGVTHFLVGGIATTWAFFHA.

The protein belongs to the PsaA/PsaB family. The PsaA/B heterodimer binds the P700 divinyl chlorophyll special pair and subsequent electron acceptors. PSI consists of a core antenna complex that captures photons, and an electron transfer chain that converts photonic excitation into a charge separation. The cyanobacterial PSI reaction center is composed of one copy each of PsaA,B,C,D,E,F,I,J,K,L,M and X, and forms trimeric complexes. Requires PSI electron transfer chain: 5 divinyl chlorophyll a, 1 divinyl chlorophyll a', 2 phylloquinones and 3 4Fe-4S clusters. PSI core antenna: 90 divinyl chlorophyll a, 22 carotenoids, 3 phospholipids and 1 galactolipid. P700 is a divinyl chlorophyll a/divinyl chlorophyll a' dimer, A0 is one or more divinyl chlorophyll a, A1 is one or both phylloquinones and FX is a shared 4Fe-4S iron-sulfur center. as cofactor.

It localises to the cellular thylakoid membrane. It catalyses the reaction reduced [plastocyanin] + hnu + oxidized [2Fe-2S]-[ferredoxin] = oxidized [plastocyanin] + reduced [2Fe-2S]-[ferredoxin]. Functionally, psaA and PsaB bind P700, the primary electron donor of photosystem I (PSI), as well as the electron acceptors A0, A1 and FX. PSI is a plastocyanin/cytochrome c6-ferredoxin oxidoreductase, converting photonic excitation into a charge separation, which transfers an electron from the donor P700 chlorophyll pair to the spectroscopically characterized acceptors A0, A1, FX, FA and FB in turn. Oxidized P700 is reduced on the lumenal side of the thylakoid membrane by plastocyanin or cytochrome c6. The polypeptide is Photosystem I P700 chlorophyll a apoprotein A1 (Prochlorococcus marinus (strain AS9601)).